A 341-amino-acid polypeptide reads, in one-letter code: Guanine nucleotide-binding protein subunit beta (341 aa).

WD repeat units follow at residues 54–84 (GHLA…IVWD), 96–126 (LRSS…SIYS), 142–171 (GHTG…ALWD), 183–213 (GHTG…KLWD), 225–255 (GHES…RLFD), 269–299 (NIIC…NVWD), and 311–341 (GHDN…KIWN).

This sequence belongs to the WD repeat G protein beta family. As to quaternary structure, g proteins are composed of 3 units, alpha, beta and gamma.

Its function is as follows. Guanine nucleotide-binding proteins (G proteins) are involved as a modulator or transducer in various transmembrane signaling systems. The beta and gamma chains are required for the GTPase activity, for replacement of GDP by GTP, and for G protein-effector interaction. The protein is Guanine nucleotide-binding protein subunit beta of Lymnaea stagnalis (Great pond snail).